We begin with the raw amino-acid sequence, 348 residues long: Protein RecA (348 aa).

Residue 64–71 (GPESSGKT) coordinates ATP. Positions 325–335 (YEIDGANKEPL) are enriched in basic and acidic residues. The disordered stretch occupies residues 325–348 (YEIDGANKEPLEETEETLSLLDDE). A compositionally biased stretch (acidic residues) spans 336–348 (EETEETLSLLDDE).

This sequence belongs to the RecA family.

The protein localises to the cytoplasm. In terms of biological role, can catalyze the hydrolysis of ATP in the presence of single-stranded DNA, the ATP-dependent uptake of single-stranded DNA by duplex DNA, and the ATP-dependent hybridization of homologous single-stranded DNAs. It interacts with LexA causing its activation and leading to its autocatalytic cleavage. The chain is Protein RecA from Listeria welshimeri serovar 6b (strain ATCC 35897 / DSM 20650 / CCUG 15529 / CIP 8149 / NCTC 11857 / SLCC 5334 / V8).